The primary structure comprises 165 residues: Ubiquitin-fold modifier-conjugating enzyme 1 (165 aa).

Cys117 acts as the Glycyl thioester intermediate in catalysis.

This sequence belongs to the ubiquitin-conjugating enzyme family. UFC1 subfamily.

Functionally, E2-like enzyme which forms an intermediate with UFM1 via a thioester linkage. The chain is Ubiquitin-fold modifier-conjugating enzyme 1 from Brugia malayi (Filarial nematode worm).